The sequence spans 468 residues: Tissue alpha-L-fucosidase (468 aa).

An N-terminal signal peptide occupies residues 1–22; sequence MRSWVVGARLLLLLQLVLVLGA. Threonine 173 bears the Phosphothreonine mark. N-linked (GlcNAc...) asparagine glycosylation is found at asparagine 244, asparagine 271, and asparagine 320.

The protein belongs to the glycosyl hydrolase 29 family. Homotetramer.

It localises to the lysosome. It catalyses the reaction an alpha-L-fucoside + H2O = L-fucose + an alcohol. The catalysed reaction is a neolactoside IV(2)-alpha-Fuc-nLc4Cer(d18:1(4E)) + H2O = a neolactoside nLc4Cer(d18:1(4E)) + L-fucose. The enzyme catalyses a neolactoside IV(2)-alpha-Fuc-nLc4Cer(d18:0) + H2O = a neolactoside nLc4Cer(d18:0) + L-fucose. In terms of biological role, alpha-L-fucosidase is responsible for hydrolyzing the alpha-1,6-linked fucose joined to the reducing-end N-acetylglucosamine of the carbohydrate moieties of glycoproteins. The sequence is that of Tissue alpha-L-fucosidase (FUCA1) from Bos taurus (Bovine).